The sequence spans 428 residues: Glucose-1-phosphate adenylyltransferase (428 aa).

Alpha-D-glucose 1-phosphate-binding positions include Tyr-99, Gly-164, 179–180 (EK), and Ser-190.

This sequence belongs to the bacterial/plant glucose-1-phosphate adenylyltransferase family. As to quaternary structure, homotetramer.

The catalysed reaction is alpha-D-glucose 1-phosphate + ATP + H(+) = ADP-alpha-D-glucose + diphosphate. It participates in glycan biosynthesis; glycogen biosynthesis. Involved in the biosynthesis of ADP-glucose, a building block required for the elongation reactions to produce glycogen. Catalyzes the reaction between ATP and alpha-D-glucose 1-phosphate (G1P) to produce pyrophosphate and ADP-Glc. This Thermomicrobium roseum (strain ATCC 27502 / DSM 5159 / P-2) protein is Glucose-1-phosphate adenylyltransferase.